A 420-amino-acid polypeptide reads, in one-letter code: Gamma-glutamyl phosphate reductase (420 aa).

This sequence belongs to the gamma-glutamyl phosphate reductase family.

The protein resides in the cytoplasm. The enzyme catalyses L-glutamate 5-semialdehyde + phosphate + NADP(+) = L-glutamyl 5-phosphate + NADPH + H(+). Its pathway is amino-acid biosynthesis; L-proline biosynthesis; L-glutamate 5-semialdehyde from L-glutamate: step 2/2. Catalyzes the NADPH-dependent reduction of L-glutamate 5-phosphate into L-glutamate 5-semialdehyde and phosphate. The product spontaneously undergoes cyclization to form 1-pyrroline-5-carboxylate. The polypeptide is Gamma-glutamyl phosphate reductase (Neisseria meningitidis serogroup C (strain 053442)).